The primary structure comprises 94 residues: Large ribosomal subunit protein bL25 (94 aa).

It belongs to the bacterial ribosomal protein bL25 family. As to quaternary structure, part of the 50S ribosomal subunit; part of the 5S rRNA/L5/L18/L25 subcomplex. Contacts the 5S rRNA. Binds to the 5S rRNA independently of L5 and L18.

In terms of biological role, this is one of the proteins that binds to the 5S RNA in the ribosome where it forms part of the central protuberance. The sequence is that of Large ribosomal subunit protein bL25 from Escherichia coli (strain K12 / DH10B).